Consider the following 272-residue polypeptide: 2-dehydro-3-deoxyphosphooctonate aldolase (272 aa).

The protein belongs to the KdsA family.

It localises to the cytoplasm. It catalyses the reaction D-arabinose 5-phosphate + phosphoenolpyruvate + H2O = 3-deoxy-alpha-D-manno-2-octulosonate-8-phosphate + phosphate. It functions in the pathway carbohydrate biosynthesis; 3-deoxy-D-manno-octulosonate biosynthesis; 3-deoxy-D-manno-octulosonate from D-ribulose 5-phosphate: step 2/3. It participates in bacterial outer membrane biogenesis; lipopolysaccharide biosynthesis. This chain is 2-dehydro-3-deoxyphosphooctonate aldolase, found in Pelobacter propionicus (strain DSM 2379 / NBRC 103807 / OttBd1).